A 490-amino-acid chain; its full sequence is Protein lag-3 (490 aa).

5 disordered regions span residues 18–55 (PSVA…EDEP), 105–155 (EDEE…PTSE), 213–235 (SSAD…SPAE), 307–362 (SSSE…MQRI), and 391–490 (QQQQ…ANIN). The segment covering 105–119 (EDEERKRVEQQKNKE) has biased composition (basic and acidic residues). Residues 122–138 (NASTSAPTSSRNGGQSV) are compositionally biased toward polar residues. Polar residues predominate over residues 307-318 (SSSESPTKQSPM). Low complexity-rich tracts occupy residues 341 to 359 (QLQQ…QQEM), 391 to 404 (QQQQ…HHQM), and 413 to 456 (QAHQ…HHQM).

Component of a complex consisting of at least a lin-12/Notch intracellular domain (NICD), lag-1, and lag-3. Interacts with a NICD of lin-12/Notch or glp-1/Notch; the interactions are direct. As to expression, expressed in the progenitor zone and the early pachytene region of the hermaphrodite gonad.

It localises to the nucleus. Glp-1/Notch and lin-12/Notch proteins promote signaling by recruiting lag-3 to target promoters, where it functions as a transcriptional activator, probably as part of a complex with a Notch intracellular domain (NICD) and the transcription regulator lag-1. Involved in the p53-mediated germ-cell apoptotic response to DNA damage, perhaps acting as a transcriptional activator. May regulate phosphatase lip-1 mRNA transcription downstream of glp-1. The protein is Protein lag-3 (sel-8) of Caenorhabditis elegans.